The chain runs to 535 residues: uncharacterized protein (535 aa).

The next 6 helical transmembrane spans lie at 55 to 75 (LITIICHLFLLLNIFISIPII), 82 to 102 (FMPVGFTALAAILLAMQIMFV), 115 to 135 (IICFLLAIDVLVVFLSPILRH), 143 to 163 (AFVLWAFLMSLWIVITDLMLF), 201 to 221 (STILSVILTILTIHTLVTLIM), and 346 to 366 (VSGPYVLVAHGIGGVYSNVFA).

Its subcellular location is the membrane. This is an uncharacterized protein from Schizosaccharomyces pombe (strain 972 / ATCC 24843) (Fission yeast).